The following is a 132-amino-acid chain: Small ribosomal subunit protein uS8 (132 aa).

The protein belongs to the universal ribosomal protein uS8 family. As to quaternary structure, part of the 30S ribosomal subunit. Contacts proteins S5 and S12.

Its function is as follows. One of the primary rRNA binding proteins, it binds directly to 16S rRNA central domain where it helps coordinate assembly of the platform of the 30S subunit. In Paenarthrobacter aurescens (strain TC1), this protein is Small ribosomal subunit protein uS8.